A 172-amino-acid chain; its full sequence is NAD(P)H-quinone oxidoreductase subunit I, chloroplastic (172 aa).

2 4Fe-4S ferredoxin-type domains span residues 55–84 and 95–124; these read GRIHFEFDKCIACEVCVRVCPIDLPVVDWK and LNYSIDFGICIFCGNCVEYCPTNCLSMTEE. [4Fe-4S] cluster-binding residues include Cys64, Cys67, Cys70, Cys74, Cys104, Cys107, Cys110, and Cys114.

It belongs to the complex I 23 kDa subunit family. NDH is composed of at least 16 different subunits, 5 of which are encoded in the nucleus. [4Fe-4S] cluster serves as cofactor.

Its subcellular location is the plastid. It localises to the chloroplast thylakoid membrane. The catalysed reaction is a plastoquinone + NADH + (n+1) H(+)(in) = a plastoquinol + NAD(+) + n H(+)(out). The enzyme catalyses a plastoquinone + NADPH + (n+1) H(+)(in) = a plastoquinol + NADP(+) + n H(+)(out). In terms of biological role, NDH shuttles electrons from NAD(P)H:plastoquinone, via FMN and iron-sulfur (Fe-S) centers, to quinones in the photosynthetic chain and possibly in a chloroplast respiratory chain. The immediate electron acceptor for the enzyme in this species is believed to be plastoquinone. Couples the redox reaction to proton translocation, and thus conserves the redox energy in a proton gradient. This is NAD(P)H-quinone oxidoreductase subunit I, chloroplastic from Capsella bursa-pastoris (Shepherd's purse).